The sequence spans 152 residues: UPF0225 protein YchJ (152 aa).

Belongs to the UPF0225 family.

The sequence is that of UPF0225 protein YchJ from Shigella boydii serotype 18 (strain CDC 3083-94 / BS512).